The chain runs to 373 residues: DNA replication and repair protein RecF (373 aa).

30–37 lines the ATP pocket; sequence GDNAQGKT.

The protein belongs to the RecF family.

Its subcellular location is the cytoplasm. The RecF protein is involved in DNA metabolism; it is required for DNA replication and normal SOS inducibility. RecF binds preferentially to single-stranded, linear DNA. It also seems to bind ATP. This chain is DNA replication and repair protein RecF, found in Oenococcus oeni (strain ATCC BAA-331 / PSU-1).